We begin with the raw amino-acid sequence, 387 residues long: Delta(12)-acyl-lipid-desaturase (387 aa).

The segment at 1-31 is disordered; sequence MGAGGRMTVPNKWEGEGDEKSQKPVQRVPSA. Basic and acidic residues predominate over residues 13–22; sequence WEGEGDEKSQ. 2 helical membrane-spanning segments follow: residues 58-78 and 88-108; these read SYVL…TTYI and AAWP…WVIA. Positions 109-113 match the Histidine box-1 motif; sequence HECGH. The chain crosses the membrane as a helical span at residues 121–141; sequence WVDDCVGLVLHSALLVPYFSW. Positions 145–149 match the Histidine box-2 motif; it reads HRRHH. Transmembrane regions (helical) follow at residues 183–203, 229–249, and 251–271; these read VMTL…LNVS, IYIS…IAAA, and GLAW…AFLV. The Histidine box-3 motif lies at 319-323; the sequence is HVAHH.

The protein belongs to the fatty acid desaturase type 1 family.

It is found in the membrane. It participates in lipid metabolism; polyunsaturated fatty acid biosynthesis. Its function is as follows. Delta(12)-fatty acid desaturase producing in a heterologous system linoleic acid (18:2(9Z,12Z)) and to a lower extent hexadecadienoic acid (16:2(9Z,12Z)). This is Delta(12)-acyl-lipid-desaturase from Punica granatum (Pomegranate).